The following is a 561-amino-acid chain: Urocanate hydratase (561 aa).

NAD(+) is bound by residues 52 to 53 (GG), Q130, 176 to 178 (GMG), E196, R201, 242 to 243 (NA), 267 to 271 (QTSAH), 277 to 278 (YL), and Y326. C414 is a catalytic residue. G496 serves as a coordination point for NAD(+).

It belongs to the urocanase family. NAD(+) is required as a cofactor.

It localises to the cytoplasm. The enzyme catalyses 4-imidazolone-5-propanoate = trans-urocanate + H2O. The protein operates within amino-acid degradation; L-histidine degradation into L-glutamate; N-formimidoyl-L-glutamate from L-histidine: step 2/3. Catalyzes the conversion of urocanate to 4-imidazolone-5-propionate. The protein is Urocanate hydratase of Rhizobium rhizogenes (strain K84 / ATCC BAA-868) (Agrobacterium radiobacter).